Consider the following 191-residue polypeptide: MSGKPVIHEFIVVEGRDDTTAINRSVIADTIETNGSALSQETIEKIRHAQELRGVIIFTDPDFPGEKIRKQIDSAVPGCKHAFINRQDALPKAGRGLGVEHASSANIREALENFHTSGAPTEKQFISKDILVHLGLLGGVGAKERREKIGNILKIGYTNGKQLQTRLESFAISEEQLVAACQKIMQEEENE.

The region spanning 8–91 (HEFIVVEGRD…AFINRQDALP (84 aa)) is the Toprim domain. Mg(2+) is bound by residues glutamate 14, aspartate 60, and aspartate 62.

This sequence belongs to the ribonuclease M5 family. It depends on Mg(2+) as a cofactor.

Its subcellular location is the cytoplasm. It carries out the reaction Endonucleolytic cleavage of RNA, removing 21 and 42 nucleotides, respectively, from the 5'- and 3'-termini of a 5S-rRNA precursor.. In terms of biological role, required for correct processing of both the 5' and 3' ends of 5S rRNA precursor. Cleaves both sides of a double-stranded region yielding mature 5S rRNA in one step. The chain is Ribonuclease M5 from Listeria monocytogenes serovar 1/2a (strain ATCC BAA-679 / EGD-e).